Here is a 461-residue protein sequence, read N- to C-terminus: Cysteine--tRNA ligase (461 aa).

Cys28 is a binding site for Zn(2+). The 'HIGH' region motif lies at 30 to 40 (ITIYDLCHIGH). Cys209, His234, and Glu238 together coordinate Zn(2+). Positions 266-270 (KMSKS) match the 'KMSKS' region motif. Lys269 serves as a coordination point for ATP.

The protein belongs to the class-I aminoacyl-tRNA synthetase family. Monomer. The cofactor is Zn(2+).

The protein resides in the cytoplasm. It catalyses the reaction tRNA(Cys) + L-cysteine + ATP = L-cysteinyl-tRNA(Cys) + AMP + diphosphate. The chain is Cysteine--tRNA ligase from Yersinia pseudotuberculosis serotype O:3 (strain YPIII).